Consider the following 631-residue polypeptide: Mu-like prophage FluMu protein gp42 (631 aa).

2 consecutive transmembrane segments (helical) span residues 56–76 (LGNI…TMVG) and 385–405 (GLAD…PVYV). Positions 425–453 (IEDGRDKDKKTQKKNKPPRPKRGRGSVRS) are disordered. Positions 434–449 (KTQKKNKPPRPKRGRG) are enriched in basic residues. 3 helical membrane passes run 455 to 475 (VAAV…VTTA), 495 to 515 (SKAV…TVLM), and 543 to 563 (ALIP…GWLG).

This sequence to phage Mu protein gp42.

It is found in the cell membrane. The sequence is that of Mu-like prophage FluMu protein gp42 from Haemophilus influenzae (strain ATCC 51907 / DSM 11121 / KW20 / Rd).